We begin with the raw amino-acid sequence, 265 residues long: Flap endonuclease Xni (265 aa).

Aspartate 111 lines the Mg(2+) pocket. The 94-residue stretch at 167–260 folds into the 5'-3' exonuclease domain; the sequence is VVPAQLVDFW…NLREIRYPPA (94 aa). K(+) is bound by residues leucine 178, valine 189, and isoleucine 192. The tract at residues 191–196 is interaction with DNA; sequence GIGPKT.

This sequence belongs to the Xni family. Mg(2+) serves as cofactor. It depends on K(+) as a cofactor.

Its function is as follows. Has flap endonuclease activity. During DNA replication, flap endonucleases cleave the 5'-overhanging flap structure that is generated by displacement synthesis when DNA polymerase encounters the 5'-end of a downstream Okazaki fragment. This chain is Flap endonuclease Xni, found in Aeromonas salmonicida (strain A449).